The sequence spans 222 residues: Eukaryotic translation initiation factor 3 subunit K (222 aa).

In terms of domain architecture, PCI spans 46 to 208; it reads YDLEANLAVL…KIKTKNITEK (163 aa).

It belongs to the eIF-3 subunit K family. In terms of assembly, component of the eukaryotic translation initiation factor 3 (eIF-3) complex. The eIF-3 complex interacts with pix.

The protein localises to the cytoplasm. Component of the eukaryotic translation initiation factor 3 (eIF-3) complex, which is involved in protein synthesis of a specialized repertoire of mRNAs and, together with other initiation factors, stimulates binding of mRNA and methionyl-tRNAi to the 40S ribosome. The eIF-3 complex specifically targets and initiates translation of a subset of mRNAs involved in cell proliferation. The protein is Eukaryotic translation initiation factor 3 subunit K of Drosophila yakuba (Fruit fly).